A 270-amino-acid polypeptide reads, in one-letter code: UPF0354 protein BCG9842_B0431 (270 aa).

Belongs to the UPF0354 family.

The polypeptide is UPF0354 protein BCG9842_B0431 (Bacillus cereus (strain G9842)).